The following is a 202-amino-acid chain: uncharacterized protein (202 aa).

The interval 179–202 (FDEQDSTPELPPNYLLDSQKKSQG) is disordered.

This is an uncharacterized protein from Haemophilus influenzae (strain ATCC 51907 / DSM 11121 / KW20 / Rd).